The sequence spans 398 residues: Acetate kinase (398 aa).

Asparagine 7 serves as a coordination point for Mg(2+). Lysine 14 contacts ATP. Arginine 91 contributes to the substrate binding site. Residue aspartate 148 is the Proton donor/acceptor of the active site. ATP contacts are provided by residues histidine 208–glycine 212, aspartate 283–arginine 285, and glycine 331–asparagine 335. Glutamate 385 is a binding site for Mg(2+).

This sequence belongs to the acetokinase family. Homodimer. It depends on Mg(2+) as a cofactor. Requires Mn(2+) as cofactor.

It is found in the cytoplasm. The enzyme catalyses acetate + ATP = acetyl phosphate + ADP. It participates in metabolic intermediate biosynthesis; acetyl-CoA biosynthesis; acetyl-CoA from acetate: step 1/2. Functionally, catalyzes the formation of acetyl phosphate from acetate and ATP. Can also catalyze the reverse reaction. The polypeptide is Acetate kinase (Porphyromonas gingivalis (strain ATCC BAA-308 / W83)).